We begin with the raw amino-acid sequence, 304 residues long: GTPase Era (304 aa).

The Era-type G domain occupies 11 to 179 (YCGFIAIVGR…QKIVRKSLRE (169 aa)). A G1 region spans residues 19 to 26 (GRPNVGKS). Position 19–26 (19–26 (GRPNVGKS)) interacts with GTP. A G2 region spans residues 45 to 49 (QTTRH). The G3 stretch occupies residues 66-69 (DTPG). Residues 66-70 (DTPGL) and 128-131 (NKVD) each bind GTP. The interval 128–131 (NKVD) is G4. The interval 158 to 160 (ISA) is G5. A KH type-2 domain is found at 210–287 (TGEELPYSVT…HLELWVKVKA (78 aa)).

It belongs to the TRAFAC class TrmE-Era-EngA-EngB-Septin-like GTPase superfamily. Era GTPase family. As to quaternary structure, monomer.

It is found in the cytoplasm. Its subcellular location is the cell inner membrane. In terms of biological role, an essential GTPase that binds both GDP and GTP, with rapid nucleotide exchange. Plays a role in 16S rRNA processing and 30S ribosomal subunit biogenesis and possibly also in cell cycle regulation and energy metabolism. The polypeptide is GTPase Era (Actinobacillus pleuropneumoniae serotype 3 (strain JL03)).